The chain runs to 71 residues: Long neurotoxin 5 (71 aa).

5 disulfides stabilise this stretch: cysteine 3-cysteine 20, cysteine 14-cysteine 41, cysteine 26-cysteine 30, cysteine 45-cysteine 56, and cysteine 57-cysteine 62.

The protein belongs to the three-finger toxin family. Long-chain subfamily. Type II alpha-neurotoxin sub-subfamily. As to expression, expressed by the venom gland.

It is found in the secreted. Functionally, binds with high affinity to muscular (alpha-1/CHRNA1) and neuronal (alpha-7/CHRNA7) nicotinic acetylcholine receptor (nAChR) and inhibits acetylcholine from binding to the receptor, thereby impairing neuromuscular and neuronal transmission. This is Long neurotoxin 5 from Naja naja (Indian cobra).